The sequence spans 481 residues: O-acetyltransferase andG (481 aa).

The protein belongs to the fumigaclavine B O-acetyltransferase family. As to quaternary structure, monomer.

Its pathway is secondary metabolite biosynthesis; terpenoid biosynthesis. O-acetyltransferase; part of the gene cluster that mediates the biosynthesis of anditomin, a fungal meroterpenoid. The first step of the pathway is the synthesis of 3,5-dimethylorsellinic acid (DMOA) by the polyketide synthase andM. DMOA is then converted to the phthalide compound 5,7-dihydroxy-4,6-dimethylphthalide (DHDMP) by the cytochrome P450 monooxygenase andK, which is further prenylated by the prenyltransferase andD to yield farnesyl-DHDMP. Further epoxidation by the FAD-dependent monooxygenase andE leads to epoxyfarnesyl-DHDMP. The next step involves the terpene cyclase andB that converts epoxyfarnesyl-DHDMP into preandiloid A through opening of the epoxide ring followed by the cyclization of the farnesyl moiety. Preandiloid A is in turn oxidized at the C-3 hydroxyl group to yield preandiloid B by the dehydrogenase andC. The dioxygenase andA is solely responsible for the dehydrogenation of preandiloid B leading to the enone preandiloid C, as well as for the intriguing structural rearrangement to generate the bicyclo[2.2.2]octane core, transforming preandiloid C into andiconin. FAD-binding monooxygenase andJ then produces andilesin D which is reduced by dehydrogenase andI to yield andilesin A. Action of acetyltransferase andG followed by a spontaneous acetate elimination leads then to andilesin B, which is in turn substrate of the short chain dehydrogenase andH to yield andilesin C. Finally, the dioxygenase andF catalyzes the transformation of andilesin C to anditomin. This Emericella variicolor (Aspergillus stellatus) protein is O-acetyltransferase andG.